The sequence spans 1127 residues: uncharacterized protein (1127 aa).

The N-terminal stretch at 1 to 26 (MRIHQRSAPCVPVLLFLFLPSAPLCA) is a signal peptide. A disordered region spans residues 533–600 (ETESLSPPAD…ASSSPSEMAV (68 aa)). Low complexity-rich tracts occupy residues 536-549 (SLSPPADTASTPSP) and 583-599 (AGASEEADASSSPSEMA). Residues 1076-1126 (SEDEKEYQRALQELQKGNKLVASAVVEQLLQKDRNKKSAKIQQLKKRIDAQ) adopt a coiled-coil conformation.

This is an uncharacterized protein from Treponema pallidum (strain Nichols).